Reading from the N-terminus, the 140-residue chain is ATP synthase epsilon chain 1 (140 aa).

Belongs to the ATPase epsilon chain family. In terms of assembly, F-type ATPases have 2 components, CF(1) - the catalytic core - and CF(0) - the membrane proton channel. CF(1) has five subunits: alpha(3), beta(3), gamma(1), delta(1), epsilon(1). CF(0) has three main subunits: a, b and c.

The protein resides in the cell inner membrane. Produces ATP from ADP in the presence of a proton gradient across the membrane. This Methylococcus capsulatus (strain ATCC 33009 / NCIMB 11132 / Bath) protein is ATP synthase epsilon chain 1.